Reading from the N-terminus, the 88-residue chain is Apolipoprotein C-I (88 aa).

The signal sequence occupies residues 1 to 26; that stretch reads MRLILSLPVLVVVLSMVLEGPAPAQA.

The protein belongs to the apolipoprotein C1 family.

The protein localises to the secreted. In terms of biological role, inhibitor of lipoprotein binding to the low density lipoprotein (LDL) receptor, LDL receptor-related protein, and very low density lipoprotein (VLDL) receptor. Associates with high density lipoproteins (HDL) and the triacylglycerol-rich lipoproteins in the plasma and makes up about 10% of the protein of the VLDL and 2% of that of HDL. Appears to interfere directly with fatty acid uptake and is also the major plasma inhibitor of cholesteryl ester transfer protein (CETP). Binds free fatty acids and reduces their intracellular esterification. Modulates the interaction of APOE with beta-migrating VLDL and inhibits binding of beta-VLDL to the LDL receptor-related protein. This chain is Apolipoprotein C-I (APOC1), found in Lycaon pictus (African wild dog).